The sequence spans 364 residues: TD and POZ domain-containing protein 2 (364 aa).

Residues 19-149 (EFCYEWTISN…KDKLTLCCKV (131 aa)) enclose the MATH domain. A BTB domain is found at 188–255 (TDCSLLVAGH…IYTGKAPTLH (68 aa)).

This sequence belongs to the Tdpoz family.

The protein is TD and POZ domain-containing protein 2 of Mus musculus (Mouse).